A 236-amino-acid chain; its full sequence is Coat protein (236 aa).

The tract at residues 1-27 (MTTPANTTQAVGSTTSTTTTTAGATPA) is disordered. A compositionally biased stretch (low complexity) spans 7 to 27 (TTQAVGSTTSTTTTTAGATPA).

The protein belongs to the potexvirus capsid protein family.

It localises to the virion. Required for genome encapsidation. Forms ribonucleoprotein complexes along with TGB1 helicase and viral RNA. The chain is Coat protein from Brassica campestris (Field mustard).